Consider the following 371-residue polypeptide: Maltose/maltodextrin import ATP-binding protein MalK (371 aa).

The ABC transporter domain maps to Val-4–Ile-234. An ATP-binding site is contributed by Gly-36–Ser-43.

This sequence belongs to the ABC transporter superfamily. Maltooligosaccharide importer (TC 3.A.1.1.1) family. As to quaternary structure, the complex is composed of two ATP-binding proteins (MalK), two transmembrane proteins (MalG and MalK) and a solute-binding protein (MalE).

Its subcellular location is the cell inner membrane. It carries out the reaction D-maltose(out) + ATP + H2O = D-maltose(in) + ADP + phosphate + H(+). In terms of biological role, part of the ABC transporter complex MalEFGK involved in maltose/maltodextrin import. Responsible for energy coupling to the transport system. This Shigella flexneri serotype 5b (strain 8401) protein is Maltose/maltodextrin import ATP-binding protein MalK.